We begin with the raw amino-acid sequence, 72 residues long: MSKEDLIEFTGTVMELLPNAMFRVTLDNEHTILAHTSGKMRKNRIRVLAGDRVNVEMTPYDLSKGRITFRFK.

The region spanning 1–72 is the S1-like domain; it reads MSKEDLIEFT…SKGRITFRFK (72 aa).

This sequence belongs to the IF-1 family. Component of the 30S ribosomal translation pre-initiation complex which assembles on the 30S ribosome in the order IF-2 and IF-3, IF-1 and N-formylmethionyl-tRNA(fMet); mRNA recruitment can occur at any time during PIC assembly.

It is found in the cytoplasm. One of the essential components for the initiation of protein synthesis. Stabilizes the binding of IF-2 and IF-3 on the 30S subunit to which N-formylmethionyl-tRNA(fMet) subsequently binds. Helps modulate mRNA selection, yielding the 30S pre-initiation complex (PIC). Upon addition of the 50S ribosomal subunit IF-1, IF-2 and IF-3 are released leaving the mature 70S translation initiation complex. The chain is Translation initiation factor IF-1 from Gluconobacter oxydans (strain 621H) (Gluconobacter suboxydans).